We begin with the raw amino-acid sequence, 190 residues long: Probable nicotinate-nucleotide adenylyltransferase (190 aa).

It belongs to the NadD family.

The enzyme catalyses nicotinate beta-D-ribonucleotide + ATP + H(+) = deamido-NAD(+) + diphosphate. It functions in the pathway cofactor biosynthesis; NAD(+) biosynthesis; deamido-NAD(+) from nicotinate D-ribonucleotide: step 1/1. Catalyzes the reversible adenylation of nicotinate mononucleotide (NaMN) to nicotinic acid adenine dinucleotide (NaAD). In Staphylococcus saprophyticus subsp. saprophyticus (strain ATCC 15305 / DSM 20229 / NCIMB 8711 / NCTC 7292 / S-41), this protein is Probable nicotinate-nucleotide adenylyltransferase.